The primary structure comprises 119 residues: Autophagy-related protein 8 (119 aa).

G116 carries the Phosphatidylethanolamine amidated glycine lipid modification. Positions 117–119 (EAL) are cleaved as a propeptide — removed in mature form.

The protein belongs to the ATG8 family. Conjugation to phosphatidylethanolamine (PE) leads to homodimerization. Interacts with ATG1, ATG3, ATG4, ATG7 and ATG12. Post-translationally, the C-terminal Glu-117, Ala-118 and Leu-119 residues of ATG8 are removed by ATG4 to expose Gly-116 at the C-terminus. This Gly-116 forms then a thioester bond with ATG7 (E1-like activating enzyme) before being transferred to ATG3 (the specific E2 conjugating enzyme), in order to be finally amidated with phosphatidylethanolamine. This lipid modification anchors ATG8 to membranes and can be reversed by ATG4, releasing soluble ATG8.

Its subcellular location is the cytoplasmic vesicle. It localises to the cvt vesicle membrane. The protein resides in the autophagosome membrane. The protein localises to the vacuole membrane. Its function is as follows. Ubiquitin-like modifier involved in cytoplasm to vacuole transport (Cvt) vesicles and autophagosome formation. With ATG4, mediates the delivery of the vesicles and autophagosomes to the vacuole via the microtubule cytoskeleton. Required for selective autophagic degradation of the nucleus (nucleophagy) as well as for mitophagy which contributes to regulate mitochondrial quantity and quality by eliminating the mitochondria to a basal level to fulfill cellular energy requirements and preventing excess ROS production. Also participates in membrane fusion events that take place in the early secretory pathway. Also involved in endoplasmic reticulum-specific autophagic process and is essential for the survival of cells subjected to severe ER stress. The ATG8-PE conjugate mediates tethering between adjacent membranes and stimulates membrane hemifusion, leading to expansion of the autophagosomal membrane during autophagy. Moreover not only conjugation, but also subsequent ATG8-PE deconjugation is an important step required to facilitate multiple events during macroautophagy, and especially for efficient autophagosome biogenesis, the assembly of ATG9-containing tubulovesicular clusters into phagophores/autophagosomes, and for the disassembly of PAS-associated ATG components. Autophagy is required for conidiation, aerial mycelial growth, and pseudothecia formation, but not for host invasion. This Cochliobolus heterostrophus (strain C4 / ATCC 48331 / race T) (Southern corn leaf blight fungus) protein is Autophagy-related protein 8.